A 402-amino-acid chain; its full sequence is Multidrug resistance protein MdtG (402 aa).

11 helical membrane passes run L14 to F34, L52 to W72, L90 to I110, A113 to V133, A149 to L169, P171 to V191, V219 to I239, L254 to P274, V288 to N308, L318 to I338, and A376 to F396.

This sequence belongs to the major facilitator superfamily. DHA1 family. MdtG (TC 2.A.1.2.20) subfamily.

Its subcellular location is the cell inner membrane. In Proteus mirabilis (strain HI4320), this protein is Multidrug resistance protein MdtG.